A 284-amino-acid polypeptide reads, in one-letter code: Phosphoenolpyruvate guanylyltransferase (284 aa).

A disordered region spans residues A94–Q123. Residues D105–A114 show a composition bias toward basic and acidic residues. Phosphoenolpyruvate contacts are provided by T203, G219, and S222.

Belongs to the CofC family.

It carries out the reaction phosphoenolpyruvate + GTP + H(+) = enolpyruvoyl-2-diphospho-5'-guanosine + diphosphate. It participates in cofactor biosynthesis; coenzyme F420 biosynthesis. In terms of biological role, guanylyltransferase that catalyzes the activation of phosphoenolpyruvate (PEP) as enolpyruvoyl-2-diphospho-5'-guanosine, via the condensation of PEP with GTP. It is involved in the biosynthesis of coenzyme F420, a hydride carrier cofactor. This is Phosphoenolpyruvate guanylyltransferase from Sanguibacter keddieii (strain ATCC 51767 / DSM 10542 / NCFB 3025 / ST-74).